Here is a 391-residue protein sequence, read N- to C-terminus: Tryptophan synthase beta chain (391 aa).

At Lys-84 the chain carries N6-(pyridoxal phosphate)lysine.

The protein belongs to the TrpB family. Tetramer of two alpha and two beta chains. Requires pyridoxal 5'-phosphate as cofactor.

The catalysed reaction is (1S,2R)-1-C-(indol-3-yl)glycerol 3-phosphate + L-serine = D-glyceraldehyde 3-phosphate + L-tryptophan + H2O. The protein operates within amino-acid biosynthesis; L-tryptophan biosynthesis; L-tryptophan from chorismate: step 5/5. Its function is as follows. The beta subunit is responsible for the synthesis of L-tryptophan from indole and L-serine. The protein is Tryptophan synthase beta chain of Caldanaerobacter subterraneus subsp. tengcongensis (strain DSM 15242 / JCM 11007 / NBRC 100824 / MB4) (Thermoanaerobacter tengcongensis).